Reading from the N-terminus, the 286-residue chain is Homoserine kinase (286 aa).

78–88 (PLARGLGSSSS) provides a ligand contact to ATP.

It belongs to the GHMP kinase family. Homoserine kinase subfamily.

It localises to the cytoplasm. The catalysed reaction is L-homoserine + ATP = O-phospho-L-homoserine + ADP + H(+). It functions in the pathway amino-acid biosynthesis; L-threonine biosynthesis; L-threonine from L-aspartate: step 4/5. Its function is as follows. Catalyzes the ATP-dependent phosphorylation of L-homoserine to L-homoserine phosphate. This Streptococcus equi subsp. zooepidemicus (strain H70) protein is Homoserine kinase.